The primary structure comprises 29 residues: Small ribosomal subunit protein uS7 (29 aa).

Residues 1 to 29 (ELIGAANRDTKSFSINRKDAKERVAKAAR) form a disordered region. Positions 8 to 29 (RDTKSFSINRKDAKERVAKAAR) are enriched in basic and acidic residues.

Belongs to the universal ribosomal protein uS7 family. Part of the 30S ribosomal subunit.

Functionally, one of the primary rRNA binding proteins, it binds directly to 16S rRNA where it nucleates assembly of the head domain of the 30S subunit. Is located at the subunit interface close to the decoding center. This Methanosarcina thermophila protein is Small ribosomal subunit protein uS7 (rps7).